The following is a 138-amino-acid chain: Small ribosomal subunit protein uS12 (138 aa).

The segment at Lys33–Pro55 is disordered. The residue at position 102 (Asp102) is a 3-methylthioaspartic acid.

It belongs to the universal ribosomal protein uS12 family. As to quaternary structure, part of the 30S ribosomal subunit. Contacts proteins S8 and S17. May interact with IF1 in the 30S initiation complex.

Its function is as follows. With S4 and S5 plays an important role in translational accuracy. In terms of biological role, interacts with and stabilizes bases of the 16S rRNA that are involved in tRNA selection in the A site and with the mRNA backbone. Located at the interface of the 30S and 50S subunits, it traverses the body of the 30S subunit contacting proteins on the other side and probably holding the rRNA structure together. The combined cluster of proteins S8, S12 and S17 appears to hold together the shoulder and platform of the 30S subunit. The sequence is that of Small ribosomal subunit protein uS12 from Bacillus velezensis (strain DSM 23117 / BGSC 10A6 / LMG 26770 / FZB42) (Bacillus amyloliquefaciens subsp. plantarum).